We begin with the raw amino-acid sequence, 410 residues long: Extracellular serine proteinase (410 aa).

The first 19 residues, 1–19 (MKRGGLWLLLGLLVLSACS), serve as a signal peptide directing secretion. The propeptide occupies 20-132 (SNPPAASTQE…IEADQEVRAF (113 aa)). The Inhibitor I9 domain maps to 45–130 (YIVVYKENAD…AYIEADQEVR (86 aa)). In terms of domain architecture, Peptidase S8 spans 139 to 410 (TWGLDRIDQR…SPNLLLYTPF (272 aa)). Active-site charge relay system residues include aspartate 171, histidine 204, and serine 356.

Belongs to the peptidase S8 family. In terms of processing, contains 4 Cys residues that form two disulfide bonds. Post-translationally, glycosylated. This proteinase has a 0.7% carbohydrate content.

It localises to the secreted. Functionally, serine proteinase with preferred activity for amino acids with aromatic side groups at the P1' side of the scissible bond. In Thermus sp. (strain Rt41A), this protein is Extracellular serine proteinase.